The sequence spans 974 residues: Alpha-1,4 glucan phosphorylase L-2 isozyme, chloroplastic/amyloplastic (974 aa).

The N-terminal 81 residues, 1 to 81, are a transit peptide targeting the chloroplast; it reads MATFAVSGLN…LDVFQPDSTS (81 aa). Residues 509–551 are disordered; sequence ADVEKAADEEQEEEGKDDSKDEETEAVKAETTNEEEETEVKKV. Acidic residues predominate over residues 517–532; it reads EEQEEEGKDDSKDEET. K820 carries the post-translational modification N6-(pyridoxal phosphate)lysine.

Belongs to the glycogen phosphorylase family. Requires pyridoxal 5'-phosphate as cofactor. Leaves.

The protein localises to the plastid. It localises to the chloroplast. The protein resides in the amyloplast. It catalyses the reaction [(1-&gt;4)-alpha-D-glucosyl](n) + phosphate = [(1-&gt;4)-alpha-D-glucosyl](n-1) + alpha-D-glucose 1-phosphate. In terms of biological role, phosphorylase is an important allosteric enzyme in carbohydrate metabolism. Enzymes from different sources differ in their regulatory mechanisms and in their natural substrates. However, all known phosphorylases share catalytic and structural properties. The protein is Alpha-1,4 glucan phosphorylase L-2 isozyme, chloroplastic/amyloplastic (STP-1) of Solanum tuberosum (Potato).